The following is a 417-amino-acid chain: Proteasome-activating nucleotidase (417 aa).

Residues 24–78 (SKYLLDRVKQLEERNVRLKEEYRKIELEKKSVENKKVQYEREIRKLTSELDRLKT) adopt a coiled-coil conformation. ATP contacts are provided by residues 203–208 (GTGKTL) and H342. Residues 415-417 (MFA) are docks into pockets in the proteasome alpha-ring to cause gate opening.

Belongs to the AAA ATPase family. As to quaternary structure, homohexamer. The hexameric complex has a two-ring architecture resembling a top hat that caps the 20S proteasome core at one or both ends. Upon ATP-binding, the C-terminus of PAN interacts with the alpha-rings of the proteasome core by binding to the intersubunit pockets.

It localises to the cytoplasm. Its function is as follows. ATPase which is responsible for recognizing, binding, unfolding and translocation of substrate proteins into the archaeal 20S proteasome core particle. Is essential for opening the gate of the 20S proteasome via an interaction with its C-terminus, thereby allowing substrate entry and access to the site of proteolysis. Thus, the C-termini of the proteasomal ATPase function like a 'key in a lock' to induce gate opening and therefore regulate proteolysis. Unfolding activity requires energy from ATP hydrolysis, whereas ATP binding alone promotes ATPase-20S proteasome association which triggers gate opening, and supports translocation of unfolded substrates. In Methanocella arvoryzae (strain DSM 22066 / NBRC 105507 / MRE50), this protein is Proteasome-activating nucleotidase.